Reading from the N-terminus, the 262-residue chain is MQYKTKAKKSLGQNFLQDENIIRKIVQLANIKKHDIVIEIGPGLGALTRYLLSSSNNVSVVEFDASVIDTLIANCQKYGTPHIYNQDFLKFDISSLENSSNQKIKLIGNLPYNISSPILFKVIKDSDKIVDAHFMLQKEVVERIVSLPNSKSYGRLSVILQYHFDCSMILKIPPEVFYPQPKVDSAILRLKPKNSKELLKNYNFFEEIVKQSFAQRRKTLHNNLKSILKERKIDPSTLPVDTNLRAENLSVGDFVSLANFLS.

6 residues coordinate S-adenosyl-L-methionine: N14, L16, G41, E62, D87, and N109.

Belongs to the class I-like SAM-binding methyltransferase superfamily. rRNA adenine N(6)-methyltransferase family. RsmA subfamily.

It is found in the cytoplasm. The enzyme catalyses adenosine(1518)/adenosine(1519) in 16S rRNA + 4 S-adenosyl-L-methionine = N(6)-dimethyladenosine(1518)/N(6)-dimethyladenosine(1519) in 16S rRNA + 4 S-adenosyl-L-homocysteine + 4 H(+). Functionally, specifically dimethylates two adjacent adenosines (A1518 and A1519) in the loop of a conserved hairpin near the 3'-end of 16S rRNA in the 30S particle. May play a critical role in biogenesis of 30S subunits. The polypeptide is Ribosomal RNA small subunit methyltransferase A (Francisella tularensis subsp. novicida (strain U112)).